We begin with the raw amino-acid sequence, 206 residues long: Ribosome maturation factor RimP (206 aa).

Residues 164 to 206 (GGIPEGRAVPSDAVDLTDDSGVDSVEDDEAELEDVENEEGFDK) form a disordered region. Residues 178–206 (DLTDDSGVDSVEDDEAELEDVENEEGFDK) are compositionally biased toward acidic residues.

Belongs to the RimP family.

Its subcellular location is the cytoplasm. In terms of biological role, required for maturation of 30S ribosomal subunits. The chain is Ribosome maturation factor RimP from Rhodococcus erythropolis (strain PR4 / NBRC 100887).